The sequence spans 245 residues: 1-(5-phosphoribosyl)-5-[(5-phosphoribosylamino)methylideneamino] imidazole-4-carboxamide isomerase (245 aa).

Catalysis depends on Asp-7, which acts as the Proton acceptor. The active-site Proton donor is the Asp-129.

Belongs to the HisA/HisF family.

The protein resides in the cytoplasm. The catalysed reaction is 1-(5-phospho-beta-D-ribosyl)-5-[(5-phospho-beta-D-ribosylamino)methylideneamino]imidazole-4-carboxamide = 5-[(5-phospho-1-deoxy-D-ribulos-1-ylimino)methylamino]-1-(5-phospho-beta-D-ribosyl)imidazole-4-carboxamide. It participates in amino-acid biosynthesis; L-histidine biosynthesis; L-histidine from 5-phospho-alpha-D-ribose 1-diphosphate: step 4/9. This chain is 1-(5-phosphoribosyl)-5-[(5-phosphoribosylamino)methylideneamino] imidazole-4-carboxamide isomerase, found in Escherichia coli O6:K15:H31 (strain 536 / UPEC).